The following is a 480-amino-acid chain: Glutamate--tRNA ligase (480 aa).

The 'HIGH' region motif lies at 21–31; it reads PSPTGYLHVGG. Zn(2+)-binding residues include C110, C112, C137, and H139. The 'KMSKS' region motif lies at 248–252; it reads KLSKR. K251 is a binding site for ATP.

This sequence belongs to the class-I aminoacyl-tRNA synthetase family. Glutamate--tRNA ligase type 1 subfamily. Monomer. It depends on Zn(2+) as a cofactor.

It localises to the cytoplasm. The catalysed reaction is tRNA(Glu) + L-glutamate + ATP = L-glutamyl-tRNA(Glu) + AMP + diphosphate. In terms of biological role, catalyzes the attachment of glutamate to tRNA(Glu) in a two-step reaction: glutamate is first activated by ATP to form Glu-AMP and then transferred to the acceptor end of tRNA(Glu). This chain is Glutamate--tRNA ligase, found in Actinobacillus succinogenes (strain ATCC 55618 / DSM 22257 / CCUG 43843 / 130Z).